Reading from the N-terminus, the 474-residue chain is 3-isopropylmalate dehydratase large subunit (474 aa).

[4Fe-4S] cluster is bound by residues cysteine 355, cysteine 415, and cysteine 418.

It belongs to the aconitase/IPM isomerase family. LeuC type 1 subfamily. As to quaternary structure, heterodimer of LeuC and LeuD. [4Fe-4S] cluster is required as a cofactor.

It carries out the reaction (2R,3S)-3-isopropylmalate = (2S)-2-isopropylmalate. It functions in the pathway amino-acid biosynthesis; L-leucine biosynthesis; L-leucine from 3-methyl-2-oxobutanoate: step 2/4. In terms of biological role, catalyzes the isomerization between 2-isopropylmalate and 3-isopropylmalate, via the formation of 2-isopropylmaleate. This is 3-isopropylmalate dehydratase large subunit from Shewanella sp. (strain MR-7).